A 61-amino-acid chain; its full sequence is Large ribosomal subunit protein bL32 (61 aa).

Residues 1–16 show a composition bias toward basic residues; it reads MAVPKRKTSPSRRGMR. The tract at residues 1–61 is disordered; sequence MAVPKRKTSP…RQILKPKAEA (61 aa). A compositionally biased stretch (basic and acidic residues) spans 28–44; that stretch reads VEDKDSGELRRPHHLDL.

This sequence belongs to the bacterial ribosomal protein bL32 family.

In Xanthobacter autotrophicus (strain ATCC BAA-1158 / Py2), this protein is Large ribosomal subunit protein bL32.